The following is a 446-amino-acid chain: Elongation factor Ts, mitochondrial (446 aa).

The N-terminal 33 residues, 1-33, are a transit peptide targeting the mitochondrion; it reads MSGSRSALSVVRLAACAKPCTLGSTSSVLTRPF.

This sequence belongs to the EF-Ts family.

It is found in the mitochondrion. In terms of biological role, associates with the EF-Tu.GDP complex and induces the exchange of GDP to GTP. It remains bound to the aminoacyl-tRNA.EF-Tu.GTP complex up to the GTP hydrolysis stage on the ribosome. The protein is Elongation factor Ts, mitochondrial of Mycosarcoma maydis (Corn smut fungus).